The primary structure comprises 535 residues: Sucrose transport protein SUT5 (535 aa).

The Cytoplasmic portion of the chain corresponds to M1–R53. A helical membrane pass occupies residues L54–L74. Residues L75–S87 lie on the Extracellular side of the membrane. A helical transmembrane segment spans residues Y88–G108. At Y109 to R122 the chain is on the cytoplasmic side. Residues P123–A143 traverse the membrane as a helical segment. The Extracellular segment spans residues D144–R163. The chain crosses the membrane as a helical span at residues W164–V184. At Q185–N203 the chain is on the cytoplasmic side. Residues V204 to G224 traverse the membrane as a helical segment. The Extracellular segment spans residues A225–K249. Residues G250 to A270 traverse the membrane as a helical segment. Residues D271–P302 are Cytoplasmic-facing. A helical membrane pass occupies residues P303 to I323. Residues Q324–R354 lie on the Extracellular side of the membrane. The chain crosses the membrane as a helical span at residues E355 to P375. At K376–K384 the chain is on the cytoplasmic side. Residues V385–G405 traverse the membrane as a helical segment. At M406–A429 the chain is on the extracellular side. A helical transmembrane segment spans residues V430–W450. Topologically, residues A451–G465 are cytoplasmic. A helical transmembrane segment spans residues L466–A486. Over G487–T498 the chain is Extracellular. The helical transmembrane segment at P499–L519 threads the bilayer. The Cytoplasmic segment spans residues P520–H535.

This sequence belongs to the glycoside-pentoside-hexuronide (GPH) cation symporter transporter (TC 2.A.2.4) family. Homodimer.

It is found in the cell membrane. It functions in the pathway glycan biosynthesis; sucrose metabolism. Functionally, responsible for the transport of sucrose into the cell, with the concomitant uptake of protons (symport system). May also transport other glucosides. This Oryza sativa subsp. indica (Rice) protein is Sucrose transport protein SUT5 (SUT5).